The primary structure comprises 862 residues: DNA mismatch repair protein MutS (862 aa).

603–610 serves as a coordination point for ATP; the sequence is GPNMSGKS.

It belongs to the DNA mismatch repair MutS family.

Functionally, this protein is involved in the repair of mismatches in DNA. It is possible that it carries out the mismatch recognition step. This protein has a weak ATPase activity. The protein is DNA mismatch repair protein MutS of Bacillus velezensis (strain DSM 23117 / BGSC 10A6 / LMG 26770 / FZB42) (Bacillus amyloliquefaciens subsp. plantarum).